Consider the following 235-residue polypeptide: tRNA pseudouridine synthase B (235 aa).

Aspartate 48 serves as the catalytic Nucleophile.

The protein belongs to the pseudouridine synthase TruB family. Type 1 subfamily.

The catalysed reaction is uridine(55) in tRNA = pseudouridine(55) in tRNA. Functionally, responsible for synthesis of pseudouridine from uracil-55 in the psi GC loop of transfer RNAs. The polypeptide is tRNA pseudouridine synthase B (Phocaeicola vulgatus (strain ATCC 8482 / DSM 1447 / JCM 5826 / CCUG 4940 / NBRC 14291 / NCTC 11154) (Bacteroides vulgatus)).